Here is a 550-residue protein sequence, read N- to C-terminus: Methionine--tRNA ligase (550 aa).

The 'HIGH' region signature appears at 14–24 (PYANGSLHIGH). Zn(2+) is bound by residues C145, C148, C158, and C161. The 'KMSKS' region motif lies at 331-335 (KMSKS). ATP is bound at residue K334.

This sequence belongs to the class-I aminoacyl-tRNA synthetase family. MetG type 1 subfamily. As to quaternary structure, monomer. Zn(2+) serves as cofactor.

It localises to the cytoplasm. The enzyme catalyses tRNA(Met) + L-methionine + ATP = L-methionyl-tRNA(Met) + AMP + diphosphate. In terms of biological role, is required not only for elongation of protein synthesis but also for the initiation of all mRNA translation through initiator tRNA(fMet) aminoacylation. This Wigglesworthia glossinidia brevipalpis protein is Methionine--tRNA ligase.